The primary structure comprises 472 residues: Ribulose bisphosphate carboxylase large chain (472 aa).

The substrate site is built by Asn-120 and Thr-170. Lys-172 serves as the catalytic Proton acceptor. Lys-174 serves as a coordination point for substrate. The Mg(2+) site is built by Lys-198, Asp-200, and Glu-201. At Lys-198 the chain carries N6-carboxylysine. Catalysis depends on His-291, which acts as the Proton acceptor. Residues Arg-292, His-324, and Ser-376 each contribute to the substrate site.

Belongs to the RuBisCO large chain family. Type I subfamily. In terms of assembly, heterohexadecamer of 8 large chains and 8 small chains. Requires Mg(2+) as cofactor.

Its subcellular location is the carboxysome. The enzyme catalyses 2 (2R)-3-phosphoglycerate + 2 H(+) = D-ribulose 1,5-bisphosphate + CO2 + H2O. It catalyses the reaction D-ribulose 1,5-bisphosphate + O2 = 2-phosphoglycolate + (2R)-3-phosphoglycerate + 2 H(+). RuBisCO catalyzes two reactions: the carboxylation of D-ribulose 1,5-bisphosphate, the primary event in carbon dioxide fixation, as well as the oxidative fragmentation of the pentose substrate in the photorespiration process. Both reactions occur simultaneously and in competition at the same active site. This chain is Ribulose bisphosphate carboxylase large chain, found in Gloeothece citriformis (strain PCC 7424) (Cyanothece sp. (strain PCC 7424)).